A 163-amino-acid chain; its full sequence is Protein VASCULATURE COMPLEXITY AND CONNECTIVITY (163 aa).

Positions 1–27 (MTKIGGILVCLVIVGLDVAAAILGIQA) are cleaved as a signal peptide. Helical transmembrane passes span 54–74 (LGLG…LVGG), 95–115 (MACL…IVIG), and 133–153 (FLSI…AYYV).

This sequence belongs to the DESIGUAL family. As to quaternary structure, interacts with OPS. Expressed in vascular cells, mostly in hypocotyls, and, to a lower extent, in seedlings, roots, flowers, siliques, developing leaves and inflorescences, but barely in mature leaves and seeds. High levels in leaf primordia.

Its subcellular location is the endoplasmic reticulum membrane. In terms of biological role, required, together with OPS, for embryo provasculature development and cotyledon vascular complexity and connectivity. Necessary, partially redundantly with DEAL2 and DEAL3, to ensure bilateral symmetry development and early leaf margin patterning, probably via the regulation of auxin and CUC2 distribution. Regulates cell proliferation but not cell expansion. The chain is Protein VASCULATURE COMPLEXITY AND CONNECTIVITY from Arabidopsis thaliana (Mouse-ear cress).